Consider the following 175-residue polypeptide: Large ribosomal subunit protein uL10 (175 aa).

It belongs to the universal ribosomal protein uL10 family. Part of the ribosomal stalk of the 50S ribosomal subunit. The N-terminus interacts with L11 and the large rRNA to form the base of the stalk. The C-terminus forms an elongated spine to which L12 dimers bind in a sequential fashion forming a multimeric L10(L12)X complex.

In terms of biological role, forms part of the ribosomal stalk, playing a central role in the interaction of the ribosome with GTP-bound translation factors. The protein is Large ribosomal subunit protein uL10 of Methylococcus capsulatus (strain ATCC 33009 / NCIMB 11132 / Bath).